The following is a 120-amino-acid chain: ATP-dependent Clp protease adapter protein ClpS (120 aa).

Positions 1–20 (MATKSPVNPKVPLVQEPDRD) are disordered.

This sequence belongs to the ClpS family. As to quaternary structure, binds to the N-terminal domain of the chaperone ClpA.

Involved in the modulation of the specificity of the ClpAP-mediated ATP-dependent protein degradation. The chain is ATP-dependent Clp protease adapter protein ClpS from Albidiferax ferrireducens (strain ATCC BAA-621 / DSM 15236 / T118) (Rhodoferax ferrireducens).